The chain runs to 355 residues: Methionine import ATP-binding protein MetN 1 (355 aa).

One can recognise an ABC transporter domain in the interval 6–245; the sequence is IDLKDIAVTF…PKAPLTVDFV (240 aa). 42–49 contributes to the ATP binding site; that stretch reads GYSGAGKS.

This sequence belongs to the ABC transporter superfamily. Methionine importer (TC 3.A.1.24) family. The complex is composed of two ATP-binding proteins (MetN), two transmembrane proteins (MetI) and a solute-binding protein (MetQ).

Its subcellular location is the cell membrane. The catalysed reaction is L-methionine(out) + ATP + H2O = L-methionine(in) + ADP + phosphate + H(+). The enzyme catalyses D-methionine(out) + ATP + H2O = D-methionine(in) + ADP + phosphate + H(+). Functionally, part of the ABC transporter complex MetNIQ involved in methionine import. Responsible for energy coupling to the transport system. The protein is Methionine import ATP-binding protein MetN 1 of Lactiplantibacillus plantarum (strain ATCC BAA-793 / NCIMB 8826 / WCFS1) (Lactobacillus plantarum).